The following is a 285-amino-acid chain: MSAIIIDGIKIAKKIELNLLKKIEEREKNKKRIPGLAVILIGKNPASEIYVKRKISVCKKVGFISKYWSFPINVDEKDILNLIEKLNNNINIDGILVQLPIPKQINYYKIFSSIRPDKDVDGFHPYNTGSLCQRNPTLRACTPKGIITMLNYTKIKTHGLNAVMVGASNIVGRPMSMELLLAGCTTTVTHRFTKNLRHHIKNADLLVVAIGKPNFLHGDWIKEGAIVIDVGINKLKDGSIVGDVDFKSASLKAAYITPVPGGVGPITVITLLENTLEACEKYHEF.

Residues 166-168 (GAS) and Ile232 contribute to the NADP(+) site.

This sequence belongs to the tetrahydrofolate dehydrogenase/cyclohydrolase family. Homodimer.

The enzyme catalyses (6R)-5,10-methylene-5,6,7,8-tetrahydrofolate + NADP(+) = (6R)-5,10-methenyltetrahydrofolate + NADPH. It carries out the reaction (6R)-5,10-methenyltetrahydrofolate + H2O = (6R)-10-formyltetrahydrofolate + H(+). It participates in one-carbon metabolism; tetrahydrofolate interconversion. In terms of biological role, catalyzes the oxidation of 5,10-methylenetetrahydrofolate to 5,10-methenyltetrahydrofolate and then the hydrolysis of 5,10-methenyltetrahydrofolate to 10-formyltetrahydrofolate. The sequence is that of Bifunctional protein FolD from Buchnera aphidicola subsp. Schizaphis graminum (strain Sg).